The sequence spans 308 residues: N-acetylmuramic acid 6-phosphate etherase (308 aa).

The region spanning Ile-62 to Lys-225 is the SIS domain. The active-site Proton donor is the Glu-90. The active site involves Glu-121.

It belongs to the GCKR-like family. MurNAc-6-P etherase subfamily. Homodimer.

It catalyses the reaction N-acetyl-D-muramate 6-phosphate + H2O = N-acetyl-D-glucosamine 6-phosphate + (R)-lactate. The protein operates within amino-sugar metabolism; 1,6-anhydro-N-acetylmuramate degradation. Its pathway is amino-sugar metabolism; N-acetylmuramate degradation. It participates in cell wall biogenesis; peptidoglycan recycling. In terms of biological role, specifically catalyzes the cleavage of the D-lactyl ether substituent of MurNAc 6-phosphate, producing GlcNAc 6-phosphate and D-lactate. Together with AnmK, is also required for the utilization of anhydro-N-acetylmuramic acid (anhMurNAc) either imported from the medium or derived from its own cell wall murein, and thus plays a role in cell wall recycling. This Vibrio campbellii (strain ATCC BAA-1116) protein is N-acetylmuramic acid 6-phosphate etherase.